A 363-amino-acid chain; its full sequence is UDP-3-O-acylglucosamine N-acyltransferase (363 aa).

The active-site Proton acceptor is the histidine 266.

It belongs to the transferase hexapeptide repeat family. LpxD subfamily. In terms of assembly, homotrimer.

The catalysed reaction is a UDP-3-O-[(3R)-3-hydroxyacyl]-alpha-D-glucosamine + a (3R)-hydroxyacyl-[ACP] = a UDP-2-N,3-O-bis[(3R)-3-hydroxyacyl]-alpha-D-glucosamine + holo-[ACP] + H(+). Its pathway is bacterial outer membrane biogenesis; LPS lipid A biosynthesis. Functionally, catalyzes the N-acylation of UDP-3-O-acylglucosamine using 3-hydroxyacyl-ACP as the acyl donor. Is involved in the biosynthesis of lipid A, a phosphorylated glycolipid that anchors the lipopolysaccharide to the outer membrane of the cell. The polypeptide is UDP-3-O-acylglucosamine N-acyltransferase (Bordetella bronchiseptica (strain ATCC BAA-588 / NCTC 13252 / RB50) (Alcaligenes bronchisepticus)).